The following is a 231-amino-acid chain: Orotate phosphoribosyltransferase (231 aa).

Residues lysine 27, 79-80 (YK), arginine 106, lysine 107, lysine 110, histidine 112, and 133-141 (DDVMTAGTA) contribute to the 5-phospho-alpha-D-ribose 1-diphosphate site. Orotate is bound by residues threonine 137 and arginine 166.

The protein belongs to the purine/pyrimidine phosphoribosyltransferase family. PyrE subfamily. As to quaternary structure, homodimer. Mg(2+) serves as cofactor.

The enzyme catalyses orotidine 5'-phosphate + diphosphate = orotate + 5-phospho-alpha-D-ribose 1-diphosphate. Its pathway is pyrimidine metabolism; UMP biosynthesis via de novo pathway; UMP from orotate: step 1/2. Its function is as follows. Catalyzes the transfer of a ribosyl phosphate group from 5-phosphoribose 1-diphosphate to orotate, leading to the formation of orotidine monophosphate (OMP). In Bifidobacterium animalis subsp. lactis (strain AD011), this protein is Orotate phosphoribosyltransferase.